The sequence spans 617 residues: E3 ubiquitin-protein ligase ORTHRUS 1 (617 aa).

A PHD-type zinc finger spans residues 12 to 62 (DGVCMRCQVNPPSEETLTCGTCVTPWHVPCLLPESLASSTGEWECPDCSGV). The RING-type 1 zinc finger occupies 129 to 169 (CSICIQLPERPITTPCGHNFCLKCFEKWAVGQGKLTCMICR). Residues 258–407 (TRKQGVLVGE…FKVCRYLFVR (150 aa)) enclose the YDG domain. The segment at 495–552 (CQICREVLSLPVTTPCAHNFCKACLEAKFAGITQLRERSNGGRKLRAKKNIMTCPCCT) adopts an RING-type 2 zinc-finger fold. Residues 563-593 (QVNREMMEIIENFKKSEEEADASISEEEEEE) are a coiled coil. The interval 575-617 (FKKSEEEADASISEEEEEESEPPTKKIKMDNNSVGGSGTSLSA) is disordered. The segment covering 580–595 (EEADASISEEEEEESE) has biased composition (acidic residues). Over residues 604–617 (DNNSVGGSGTSLSA) the composition is skewed to polar residues.

In terms of tissue distribution, expressed in inflorescences and leaves.

It is found in the nucleus. The catalysed reaction is S-ubiquitinyl-[E2 ubiquitin-conjugating enzyme]-L-cysteine + [acceptor protein]-L-lysine = [E2 ubiquitin-conjugating enzyme]-L-cysteine + N(6)-ubiquitinyl-[acceptor protein]-L-lysine.. The protein operates within protein modification; protein ubiquitination. In terms of biological role, E3 ubiquitin-protein ligase. Participates in CpG methylation-dependent transcriptional regulation and epigenetic transcriptional silencing. Mediates ubiquitination with the E2 ubiquitin-conjugating enzymes UBC11, UBC8 and UBC8 homologs (e.g. UBC10, UBC11, UBC28 and UBC29) but not with UBC27, UBC30, UBC32, UBC34 and UBC36. Promotes methylation-mediated gene silencing leading, for example, to early flowering. Can bind to CpG, CpNpG, and CpNpN DNA motifs, with a strong preference for methylated forms, and with highest affinity for CpG substrate. The sequence is that of E3 ubiquitin-protein ligase ORTHRUS 1 (ORTH1) from Arabidopsis thaliana (Mouse-ear cress).